The primary structure comprises 175 residues: Gamma-crystallin B (175 aa).

2 consecutive Beta/gamma crystallin 'Greek key' domains span residues 2–40 and 41–83; these read GKIT…RVDS and GCWM…RLIP. Residues 84–88 are connecting peptide; the sequence is QHSGT. Beta/gamma crystallin 'Greek key' domains are found at residues 89-129 and 130-172; these read YRMR…NVME and GCWV…RRVM.

Belongs to the beta/gamma-crystallin family.

Functionally, crystallins are the dominant structural components of the vertebrate eye lens. This is Gamma-crystallin B (Crygb) from Rattus norvegicus (Rat).